Here is a 386-residue protein sequence, read N- to C-terminus: Tubulin beta-1 chain (386 aa).

GTP-binding residues include E7, S76, G80, T81, G82, N142, and N164. Residue E7 participates in Mg(2+) binding. Positions 363–386 are disordered; the sequence is YQDATADEEGEYEDEEEDLQAEDM. Positions 367 to 386 are enriched in acidic residues; it reads TADEEGEYEDEEEDLQAEDM.

It belongs to the tubulin family. In terms of assembly, dimer of alpha and beta chains. A typical microtubule is a hollow water-filled tube with an outer diameter of 25 nm and an inner diameter of 15 nM. Alpha-beta heterodimers associate head-to-tail to form protofilaments running lengthwise along the microtubule wall with the beta-tubulin subunit facing the microtubule plus end conferring a structural polarity. Microtubules usually have 13 protofilaments but different protofilament numbers can be found in some organisms and specialized cells. It depends on Mg(2+) as a cofactor.

Its subcellular location is the cytoplasm. It localises to the cytoskeleton. In terms of biological role, tubulin is the major constituent of microtubules, a cylinder consisting of laterally associated linear protofilaments composed of alpha- and beta-tubulin heterodimers. Microtubules grow by the addition of GTP-tubulin dimers to the microtubule end, where a stabilizing cap forms. Below the cap, tubulin dimers are in GDP-bound state, owing to GTPase activity of alpha-tubulin. The protein is Tubulin beta-1 chain (TUBB1) of Avena sativa (Oat).